A 60-amino-acid polypeptide reads, in one-letter code: Large ribosomal subunit protein eL37 (60 aa).

4 residues coordinate Zn(2+): Cys19, Cys22, Cys34, and Cys37. The C4-type zinc-finger motif lies at Cys19–Cys37.

This sequence belongs to the eukaryotic ribosomal protein eL37 family. Zn(2+) serves as cofactor.

In terms of biological role, binds to the 23S rRNA. The chain is Large ribosomal subunit protein eL37 from Methanoregula boonei (strain DSM 21154 / JCM 14090 / 6A8).